Here is a 210-residue protein sequence, read N- to C-terminus: Large ribosomal subunit protein uL4 (210 aa).

In terms of assembly, part of the 50S ribosomal subunit. In terms of processing, the N-terminus is blocked.

One of the primary rRNA binding proteins, this protein initially binds near the 5'-end of the 23S rRNA. It is important during the early stages of 50S assembly. It makes multiple contacts with different domains of the 23S rRNA in the assembled 50S subunit and ribosome. Functionally, forms part of the polypeptide exit tunnel. Its function is as follows. This protein can be incorporated into E.coli ribosomes in vivo, which resulted in decreased peptidyltransferase (Ptase) activity of the hybrid ribosomes. The hybrid 50S subunits associate less well with 30S subunits to form the ribosome. In Thermus thermophilus (strain ATCC 27634 / DSM 579 / HB8), this protein is Large ribosomal subunit protein uL4 (rplD).